We begin with the raw amino-acid sequence, 101 residues long: Protein Tat (101 aa).

An interaction with human CREBBP region spans residues 1–24; that stretch reads MEPVDPRLEPWKHPGSQPKTACTN. Positions 1 to 48 are transactivation; that stretch reads MEPVDPRLEPWKHPGSQPKTACTNCYCKKCCFHCQVCFITKGLGISYG. Zn(2+) contacts are provided by cysteine 22, cysteine 25, and cysteine 27. The cysteine-rich stretch occupies residues 22–37; it reads CTNCYCKKCCFHCQVC. At lysine 28 the chain carries N6-acetyllysine; by host PCAF. Positions 30, 33, 34, and 37 each coordinate Zn(2+). The tract at residues 38–48 is core; that stretch reads FITKGLGISYG. Basic residues predominate over residues 48 to 57; sequence GRKKRRQRRR. The segment at 48-101 is disordered; the sequence is GRKKRRQRRRAPPDSEVHQVSLPKQPASQPQGDPTGPKESKKKVERETETDPVH. Positions 49-57 match the Nuclear localization signal, RNA-binding (TAR), and protein transduction motif; sequence RKKRRQRRR. An interaction with the host capping enzyme RNGTT region spans residues 49 to 86; it reads RKKRRQRRRAPPDSEVHQVSLPKQPASQPQGDPTGPKE. N6-acetyllysine; by host EP300 and GCN5L2 occurs at positions 50 and 51. 2 positions are modified to asymmetric dimethylarginine; by host PRMT6: arginine 52 and arginine 53. Lysine 71 participates in a covalent cross-link: Glycyl lysine isopeptide (Lys-Gly) (interchain with G-Cter in ubiquitin). The segment covering 83–101 has biased composition (basic and acidic residues); it reads GPKESKKKVERETETDPVH.

This sequence belongs to the lentiviruses Tat family. Interacts with host CCNT1. Associates with the P-TEFb complex composed at least of Tat, P-TEFb (CDK9 and CCNT1), TAR RNA, RNA Pol II. Recruits the HATs CREBBP, TAF1/TFIID, EP300, PCAF and GCN5L2. Interacts with host KAT5/Tip60; this interaction targets the latter to degradation. Interacts with the host deacetylase SIRT1. Interacts with host capping enzyme RNGTT; this interaction stimulates RNGTT. Binds to host KDR, and to the host integrins ITGAV/ITGB3 and ITGA5/ITGB1. Interacts with host KPNB1/importin beta-1 without previous binding to KPNA1/importin alpha-1. Interacts with EIF2AK2. Interacts with host nucleosome assembly protein NAP1L1; this interaction may be required for the transport of Tat within the nucleus, since the two proteins interact at the nuclear rim. Interacts with host C1QBP/SF2P32; this interaction involves lysine-acetylated Tat. Interacts with the host chemokine receptors CCR2, CCR3 and CXCR4. Interacts with host DPP4/CD26; this interaction may trigger an anti-proliferative effect. Interacts with host LDLR. Interacts with the host extracellular matrix metalloproteinase MMP1. Interacts with host PRMT6; this interaction mediates Tat's methylation. Interacts with, and is ubiquitinated by MDM2/Hdm2. Interacts with host PSMC3 and HTATIP2. Interacts with STAB1; this interaction may overcome SATB1-mediated repression of IL2 and IL2RA (interleukin) in T cells by binding to the same domain than HDAC1. Interacts (when acetylated) with human CDK13, thereby increasing HIV-1 mRNA splicing and promoting the production of the doubly spliced HIV-1 protein Nef. Interacts with host TBP; this interaction modulates the activity of transcriptional pre-initiation complex. Interacts with host RELA. Interacts with host PLSCR1; this interaction negatively regulates Tat transactivation activity by altering its subcellular distribution. Post-translationally, asymmetrical arginine methylation by host PRMT6 seems to diminish the transactivation capacity of Tat and affects the interaction with host CCNT1. Acetylation by EP300, CREBBP, GCN5L2/GCN5 and PCAF regulates the transactivation activity of Tat. EP300-mediated acetylation of Lys-50 promotes dissociation of Tat from the TAR RNA through the competitive binding to PCAF's bromodomain. In addition, the non-acetylated Tat's N-terminus can also interact with PCAF. PCAF-mediated acetylation of Lys-28 enhances Tat's binding to CCNT1. Lys-50 is deacetylated by SIRT1. In terms of processing, polyubiquitination by host MDM2 does not target Tat to degradation, but activates its transactivation function and fosters interaction with CCNT1 and TAR RNA. Post-translationally, phosphorylated by EIF2AK2 on serine and threonine residues adjacent to the basic region important for TAR RNA binding and function. Phosphorylation of Tat by EIF2AK2 is dependent on the prior activation of EIF2AK2 by dsRNA.

It is found in the host nucleus. The protein resides in the host nucleolus. The protein localises to the host cytoplasm. It localises to the secreted. Its function is as follows. Transcriptional activator that increases RNA Pol II processivity, thereby increasing the level of full-length viral transcripts. Recognizes a hairpin structure at the 5'-LTR of the nascent viral mRNAs referred to as the transactivation responsive RNA element (TAR) and recruits the cyclin T1-CDK9 complex (P-TEFb complex) that will in turn hyperphosphorylate the RNA polymerase II to allow efficient elongation. The CDK9 component of P-TEFb and other Tat-activated kinases hyperphosphorylate the C-terminus of RNA Pol II that becomes stabilized and much more processive. Other factors such as HTATSF1/Tat-SF1, SUPT5H/SPT5, and HTATIP2 are also important for Tat's function. Besides its effect on RNA Pol II processivity, Tat induces chromatin remodeling of proviral genes by recruiting the histone acetyltransferases (HATs) CREBBP, EP300 and PCAF to the chromatin. This also contributes to the increase in proviral transcription rate, especially when the provirus integrates in transcriptionally silent region of the host genome. To ensure maximal activation of the LTR, Tat mediates nuclear translocation of NF-kappa-B by interacting with host RELA. Through its interaction with host TBP, Tat may also modulate transcription initiation. Tat can reactivate a latently infected cell by penetrating in it and transactivating its LTR promoter. In the cytoplasm, Tat is thought to act as a translational activator of HIV-1 mRNAs. Extracellular circulating Tat can be endocytosed by surrounding uninfected cells via the binding to several surface receptors such as CD26, CXCR4, heparan sulfate proteoglycans (HSPG) or LDLR. Neurons are rarely infected, but they internalize Tat via their LDLR. Through its interaction with nuclear HATs, Tat is potentially able to control the acetylation-dependent cellular gene expression. Modulates the expression of many cellular genes involved in cell survival, proliferation or in coding for cytokines or cytokine receptors. Tat plays a role in T-cell and neurons apoptosis. Tat induced neurotoxicity and apoptosis probably contribute to neuroAIDS. Circulating Tat also acts as a chemokine-like and/or growth factor-like molecule that binds to specific receptors on the surface of the cells, affecting many cellular pathways. In the vascular system, Tat binds to ITGAV/ITGB3 and ITGA5/ITGB1 integrins dimers at the surface of endothelial cells and competes with bFGF for heparin-binding sites, leading to an excess of soluble bFGF. The polypeptide is Protein Tat (Human immunodeficiency virus type 1 group M subtype B (isolate SF162) (HIV-1)).